Here is a 205-residue protein sequence, read N- to C-terminus: MIFSMLRKLPKVTCRDVLPEIRAICIEEIGCWMQSYSTSFLTDSYLKYIGWTLHDKHREVRVKCVKALKGLYGNRDLTARLELFTGRFKDWMVSMIVDREYSVAVEAVRLLILILKLFYPECEIRTMGGREQRQSPGAQRTFFQLLLSFFVESKLHDHAAYLVDNLWDCAGTQLKDWEGLTSLLLEKDQSTCHMEPGPGTFHLLG.

Positions 10-95 constitute an SCD domain; that stretch reads PKVTCRDVLP…GRFKDWMVSM (86 aa).

Belongs to the SCC3 family.

It localises to the nucleus. The chain is Putative STAG3-like protein 1 (STAG3L1) from Homo sapiens (Human).